A 149-amino-acid polypeptide reads, in one-letter code: MPYYAALGLDVGRRRIGVAGCDRLGITVQGLTTIVRRDFASDVAAISAIAKERQVELLVIGLPYSMDGSLGSQAKQTQRFATRLSKALQLPITYVDERLTSFEAEEMIKAVGRSPSRDKGAIDRKAAALILQQWLDEQREPRRFGSTQH.

Belongs to the YqgF nuclease family.

It localises to the cytoplasm. Functionally, could be a nuclease involved in processing of the 5'-end of pre-16S rRNA. The polypeptide is Putative pre-16S rRNA nuclease (Synechococcus sp. (strain ATCC 27144 / PCC 6301 / SAUG 1402/1) (Anacystis nidulans)).